The primary structure comprises 356 residues: Malate dehydrogenase, glyoxysomal (356 aa).

A glyoxysome-targeting transit peptide spans 1-36 (MQPIPDVNQRIARISAHLHPPKYQMEESSVLRRANC). Residues 51-57 (GAAGGIG) and aspartate 77 contribute to the NAD(+) site. Substrate contacts are provided by arginine 124 and arginine 130. NAD(+) contacts are provided by residues asparagine 137 and 160-162 (ISN). Substrate contacts are provided by asparagine 162 and arginine 196. The Proton acceptor role is filled by histidine 220. NAD(+) is bound at residue methionine 271.

This sequence belongs to the LDH/MDH superfamily. MDH type 1 family. Homodimer.

Its subcellular location is the glyoxysome. It carries out the reaction (S)-malate + NAD(+) = oxaloacetate + NADH + H(+). The sequence is that of Malate dehydrogenase, glyoxysomal (MDHG) from Cucumis sativus (Cucumber).